We begin with the raw amino-acid sequence, 218 residues long: Deoxyribose-phosphate aldolase (218 aa).

Residue aspartate 92 is the Proton donor/acceptor of the active site. Lysine 156 (schiff-base intermediate with acetaldehyde) is an active-site residue. The active-site Proton donor/acceptor is lysine 185.

This sequence belongs to the DeoC/FbaB aldolase family. DeoC type 1 subfamily.

The protein resides in the cytoplasm. It catalyses the reaction 2-deoxy-D-ribose 5-phosphate = D-glyceraldehyde 3-phosphate + acetaldehyde. Its pathway is carbohydrate degradation; 2-deoxy-D-ribose 1-phosphate degradation; D-glyceraldehyde 3-phosphate and acetaldehyde from 2-deoxy-alpha-D-ribose 1-phosphate: step 2/2. Catalyzes a reversible aldol reaction between acetaldehyde and D-glyceraldehyde 3-phosphate to generate 2-deoxy-D-ribose 5-phosphate. This is Deoxyribose-phosphate aldolase from Desulfitobacterium hafniense (strain Y51).